Here is a 487-residue protein sequence, read N- to C-terminus: 3-ketoacyl-CoA synthase 17 (487 aa).

A run of 2 helical transmembrane segments spans residues 23 to 43 and 57 to 77; these read LITH…FMNV and STGF…FFMS. The 290-residue stretch at 74–363 folds into the FAE domain; sequence FFMSRPRSIY…FFATFVAKRL (290 aa). Residues C218, H297, H382, H386, H415, and N419 contribute to the active site.

It belongs to the thiolase-like superfamily. Chalcone/stilbene synthases family. In terms of tissue distribution, expressed in flowers.

The protein resides in the membrane. It catalyses the reaction a very-long-chain acyl-CoA + malonyl-CoA + H(+) = a very-long-chain 3-oxoacyl-CoA + CO2 + CoA. It functions in the pathway lipid metabolism; fatty acid biosynthesis. Its activity is regulated as follows. Inhibited by K3 herbicides such as alachlor, allidochlor, anilofos, cafenstrole, fentrazamide and flufenacet. Strongly inhibited by metazachlor. Its function is as follows. Active on saturated acyl-CoAs up to C22. Mediates the synthesis of VLCFAs from 20 to 26 carbons in length (e.g. C20:1, C20, C24, C26). This chain is 3-ketoacyl-CoA synthase 17, found in Arabidopsis thaliana (Mouse-ear cress).